Consider the following 296-residue polypeptide: Ribosomal RNA small subunit methyltransferase A (296 aa).

Residues N30, L32, G57, E78, D103, and N128 each coordinate S-adenosyl-L-methionine.

This sequence belongs to the class I-like SAM-binding methyltransferase superfamily. rRNA adenine N(6)-methyltransferase family. RsmA subfamily.

It is found in the cytoplasm. The enzyme catalyses adenosine(1518)/adenosine(1519) in 16S rRNA + 4 S-adenosyl-L-methionine = N(6)-dimethyladenosine(1518)/N(6)-dimethyladenosine(1519) in 16S rRNA + 4 S-adenosyl-L-homocysteine + 4 H(+). Functionally, specifically dimethylates two adjacent adenosines (A1518 and A1519) in the loop of a conserved hairpin near the 3'-end of 16S rRNA in the 30S particle. May play a critical role in biogenesis of 30S subunits. The chain is Ribosomal RNA small subunit methyltransferase A from Staphylococcus haemolyticus (strain JCSC1435).